The sequence spans 96 residues: MEKTSLKLVFLFSLTVIALCLSLSAAREMAKEEVNCIGGHCPDGKKDCNCLPLIAPTMDIYETNESCRTDNECIKYCPKGCKIVDCNFGTCLCEYC.

A signal peptide spans 1 to 26 (MEKTSLKLVFLFSLTVIALCLSLSAA). 4 disulfide bridges follow: cysteine 48/cysteine 96, cysteine 67/cysteine 86, cysteine 73/cysteine 91, and cysteine 77/cysteine 93.

This sequence belongs to the DEFL family.

The protein resides in the secreted. The protein is Putative defensin-like protein 263 of Arabidopsis thaliana (Mouse-ear cress).